The sequence spans 434 residues: Nicotinate phosphoribosyltransferase (434 aa).

Residue His242 is modified to Phosphohistidine; by autocatalysis.

This sequence belongs to the NAPRTase family. Transiently phosphorylated on a His residue during the reaction cycle. Phosphorylation strongly increases the affinity for substrates and increases the rate of nicotinate D-ribonucleotide production. Dephosphorylation regenerates the low-affinity form of the enzyme, leading to product release.

It catalyses the reaction nicotinate + 5-phospho-alpha-D-ribose 1-diphosphate + ATP + H2O = nicotinate beta-D-ribonucleotide + ADP + phosphate + diphosphate. It participates in cofactor biosynthesis; NAD(+) biosynthesis; nicotinate D-ribonucleotide from nicotinate: step 1/1. In terms of biological role, catalyzes the synthesis of beta-nicotinate D-ribonucleotide from nicotinate and 5-phospho-D-ribose 1-phosphate at the expense of ATP. This Nitrobacter hamburgensis (strain DSM 10229 / NCIMB 13809 / X14) protein is Nicotinate phosphoribosyltransferase.